A 267-amino-acid chain; its full sequence is Trehalose 2-sulfotransferase (267 aa).

Alpha,alpha-trehalose contacts are provided by residues glutamine 14, 33-39 (EPQEFFQ), proline 48, and tryptophan 53. The active-site Proton acceptor is glutamate 36.

Belongs to the Stf0 sulfotransferase family. As to quaternary structure, homodimer.

The enzyme catalyses alpha,alpha-trehalose + 3'-phosphoadenylyl sulfate = 2-O-sulfo-alpha,alpha-trehalose + adenosine 3',5'-bisphosphate + H(+). Its pathway is glycolipid metabolism. In terms of biological role, catalyzes the sulfuryl group transfer from 3'-phosphoadenosine-5'-phosphosulfate (PAPS) to trehalose, leading to trehalose-2-sulfate (T2S). The sulfation of trehalose is the first step in the biosynthesis of sulfolipid-1 (SL-1), a major cell wall glycolipid and the most abundant sulfated metabolite found in Mycobacterium tuberculosis, that is a potential virulence factor thought to mediate host-pathogen interactions. In Mycobacterium tuberculosis (strain ATCC 35801 / TMC 107 / Erdman), this protein is Trehalose 2-sulfotransferase.